A 766-amino-acid polypeptide reads, in one-letter code: 5-methyltetrahydropteroyltriglutamate--homocysteine methyltransferase (766 aa).

Residues 23 to 26 and Lys121 each bind 5-methyltetrahydropteroyltri-L-glutamate; that span reads RELK. Residues 438–440 and Glu491 each bind L-homocysteine; that span reads IGS. L-methionine contacts are provided by residues 438-440 and Glu491; that span reads IGS. 5-methyltetrahydropteroyltri-L-glutamate-binding positions include 522 to 523 and Trp568; that span reads RC. Residue Asp606 coordinates L-homocysteine. Residue Asp606 coordinates L-methionine. Glu612 provides a ligand contact to 5-methyltetrahydropteroyltri-L-glutamate. His648, Cys650, and Glu672 together coordinate Zn(2+). His701 functions as the Proton donor in the catalytic mechanism. A Zn(2+)-binding site is contributed by Cys733.

Belongs to the vitamin-B12 independent methionine synthase family. Zn(2+) serves as cofactor.

The catalysed reaction is 5-methyltetrahydropteroyltri-L-glutamate + L-homocysteine = tetrahydropteroyltri-L-glutamate + L-methionine. It functions in the pathway amino-acid biosynthesis; L-methionine biosynthesis via de novo pathway; L-methionine from L-homocysteine (MetE route): step 1/1. Its function is as follows. Catalyzes the transfer of a methyl group from 5-methyltetrahydrofolate to homocysteine resulting in methionine formation. This Photobacterium profundum (strain SS9) protein is 5-methyltetrahydropteroyltriglutamate--homocysteine methyltransferase.